The sequence spans 295 residues: MEVIKITPRGYCHGVVGAIQLVRRVARDPNVPRPIYVLGQIVHNRHVVEEMEALGVITLDGEDRLSLLEKIDAGTVIFTAHGVSPAVKIRAREKGLYVVDATCPDVTRTHELIAELVSRGYEVIYIGKKGHPEPEGAVGVAPGHVHLVERAEDLEALSFAPGQKLAVTNQTTLSQWDTQALMEQVKARWPQTEIYNEICLATQQRQEAVARMAPEADLVIVVGDRRSNNSNRLVQVAQELAAREAHLVDSVEEIDPAWLKGKRKVAVTSGASTPTHITRAVIEFLEKYNVEVEER.

Cys12 lines the [4Fe-4S] cluster pocket. (2E)-4-hydroxy-3-methylbut-2-enyl diphosphate contacts are provided by His43 and His81. Positions 43 and 81 each coordinate dimethylallyl diphosphate. Isopentenyl diphosphate-binding residues include His43 and His81. [4Fe-4S] cluster is bound at residue Cys103. His131 is a binding site for (2E)-4-hydroxy-3-methylbut-2-enyl diphosphate. Residue His131 coordinates dimethylallyl diphosphate. His131 is an isopentenyl diphosphate binding site. Glu133 acts as the Proton donor in catalysis. Thr171 contributes to the (2E)-4-hydroxy-3-methylbut-2-enyl diphosphate binding site. Cys199 lines the [4Fe-4S] cluster pocket. Residues Ser227, Asn229, and Ser272 each coordinate (2E)-4-hydroxy-3-methylbut-2-enyl diphosphate. 3 residues coordinate dimethylallyl diphosphate: Ser227, Asn229, and Ser272. Positions 227, 229, and 272 each coordinate isopentenyl diphosphate.

It belongs to the IspH family. The cofactor is [4Fe-4S] cluster.

It carries out the reaction isopentenyl diphosphate + 2 oxidized [2Fe-2S]-[ferredoxin] + H2O = (2E)-4-hydroxy-3-methylbut-2-enyl diphosphate + 2 reduced [2Fe-2S]-[ferredoxin] + 2 H(+). The enzyme catalyses dimethylallyl diphosphate + 2 oxidized [2Fe-2S]-[ferredoxin] + H2O = (2E)-4-hydroxy-3-methylbut-2-enyl diphosphate + 2 reduced [2Fe-2S]-[ferredoxin] + 2 H(+). The protein operates within isoprenoid biosynthesis; dimethylallyl diphosphate biosynthesis; dimethylallyl diphosphate from (2E)-4-hydroxy-3-methylbutenyl diphosphate: step 1/1. It functions in the pathway isoprenoid biosynthesis; isopentenyl diphosphate biosynthesis via DXP pathway; isopentenyl diphosphate from 1-deoxy-D-xylulose 5-phosphate: step 6/6. Catalyzes the conversion of 1-hydroxy-2-methyl-2-(E)-butenyl 4-diphosphate (HMBPP) into a mixture of isopentenyl diphosphate (IPP) and dimethylallyl diphosphate (DMAPP). Acts in the terminal step of the DOXP/MEP pathway for isoprenoid precursor biosynthesis. This is 4-hydroxy-3-methylbut-2-enyl diphosphate reductase from Symbiobacterium thermophilum (strain DSM 24528 / JCM 14929 / IAM 14863 / T).